The chain runs to 566 residues: Potassium-transporting ATPase potassium-binding subunit (566 aa).

Transmembrane regions (helical) follow at residues 6–26 (VALL…LGIA), 60–80 (AAAI…LMLF), 128–148 (LGLT…AFVL), 167–187 (IWRI…LFLA), 247–267 (LTNF…CICF), 276–296 (VGSA…LLIM), 331–351 (FGLW…CGAV), 361–381 (LGGL…GGVG), 383–403 (GWYG…LMIG), 423–443 (IGLL…VILP), 492–512 (LMFV…GALI), and 530–550 (LFVG…FIPA).

Belongs to the KdpA family. The system is composed of three essential subunits: KdpA, KdpB and KdpC.

The protein resides in the cell inner membrane. In terms of biological role, part of the high-affinity ATP-driven potassium transport (or Kdp) system, which catalyzes the hydrolysis of ATP coupled with the electrogenic transport of potassium into the cytoplasm. This subunit binds the periplasmic potassium ions and delivers the ions to the membrane domain of KdpB through an intramembrane tunnel. This chain is Potassium-transporting ATPase potassium-binding subunit, found in Tolumonas auensis (strain DSM 9187 / NBRC 110442 / TA 4).